We begin with the raw amino-acid sequence, 110 residues long: UPF0060 membrane protein Pnap_4944 (110 aa).

4 helical membrane-spanning segments follow: residues 8–28, 33–53, 65–85, and 88–108; these read ILFAVTALAEIVGCYLPWLVL, SLLLLVPAAMSLGLFAWLLTL, YGGMYIAVALGWLRFVDGIAL, and WDLSGAAIALVGMAVIVMQPS.

Belongs to the UPF0060 family.

Its subcellular location is the cell inner membrane. The chain is UPF0060 membrane protein Pnap_4944 from Polaromonas naphthalenivorans (strain CJ2).